A 184-amino-acid polypeptide reads, in one-letter code: ATP synthase subunit b, chloroplastic (184 aa).

The helical transmembrane segment at 27–49 (LATNPINLSVVLGVLIFFGKGVL) threads the bilayer.

The protein belongs to the ATPase B chain family. F-type ATPases have 2 components, F(1) - the catalytic core - and F(0) - the membrane proton channel. F(1) has five subunits: alpha(3), beta(3), gamma(1), delta(1), epsilon(1). F(0) has four main subunits: a(1), b(1), b'(1) and c(10-14). The alpha and beta chains form an alternating ring which encloses part of the gamma chain. F(1) is attached to F(0) by a central stalk formed by the gamma and epsilon chains, while a peripheral stalk is formed by the delta, b and b' chains.

It is found in the plastid. The protein resides in the chloroplast thylakoid membrane. Functionally, f(1)F(0) ATP synthase produces ATP from ADP in the presence of a proton or sodium gradient. F-type ATPases consist of two structural domains, F(1) containing the extramembraneous catalytic core and F(0) containing the membrane proton channel, linked together by a central stalk and a peripheral stalk. During catalysis, ATP synthesis in the catalytic domain of F(1) is coupled via a rotary mechanism of the central stalk subunits to proton translocation. Its function is as follows. Component of the F(0) channel, it forms part of the peripheral stalk, linking F(1) to F(0). This chain is ATP synthase subunit b, chloroplastic, found in Phalaenopsis aphrodite subsp. formosana (Moth orchid).